Reading from the N-terminus, the 196-residue chain is UPF0319 protein VV1_0237 (196 aa).

The signal sequence occupies residues 1-19; it reads MKKMMILSALALFSSSLFA.

The protein belongs to the UPF0319 family.

This chain is UPF0319 protein VV1_0237, found in Vibrio vulnificus (strain CMCP6).